Consider the following 359-residue polypeptide: MIYHFLVPLSAQIGALNVFRYITFRSIYALLTALVITIVLGPMMMRWLQKIKCGQYIQDEVGELHKCKAGTPTMGGLLLGFGVLVSTLLWADLTNIYVWLTMLVFAGFGLVGFVDDYTKIRGKQNKGISPKAKLLGQLLVAGTAVGLLIMQPAYSTELAVPFFKNFTPDLGWMYLPFALLVMIGASNGVNLTDGLDGLAIGPSITSATCYAFFIYIAGHIGMANYLNVPHVPGVGEVTVFCGALVGAGLGFLWYNAYPAQLFMGDVGSLSIGGVLGFIAVLCKQELLLIIVGGVFVFETISVIMQVSYFKVSGGKRIFRMAPLHHHFEHKGVPESKIVIRFWVISILMALMALSTLKIR.

10 helical membrane-spanning segments follow: residues isoleucine 27–tryptophan 47, threonine 73–leucine 93, threonine 94–valine 114, leucine 134–tyrosine 154, phenylalanine 166–serine 186, glycine 197–alanine 217, glycine 233–tryptophan 253, leucine 261–leucine 281, leucine 286–valine 306, and lysine 336–leucine 356.

It belongs to the glycosyltransferase 4 family. MraY subfamily. Mg(2+) is required as a cofactor.

The protein resides in the cell inner membrane. It carries out the reaction UDP-N-acetyl-alpha-D-muramoyl-L-alanyl-gamma-D-glutamyl-meso-2,6-diaminopimeloyl-D-alanyl-D-alanine + di-trans,octa-cis-undecaprenyl phosphate = di-trans,octa-cis-undecaprenyl diphospho-N-acetyl-alpha-D-muramoyl-L-alanyl-D-glutamyl-meso-2,6-diaminopimeloyl-D-alanyl-D-alanine + UMP. It participates in cell wall biogenesis; peptidoglycan biosynthesis. Catalyzes the initial step of the lipid cycle reactions in the biosynthesis of the cell wall peptidoglycan: transfers peptidoglycan precursor phospho-MurNAc-pentapeptide from UDP-MurNAc-pentapeptide onto the lipid carrier undecaprenyl phosphate, yielding undecaprenyl-pyrophosphoryl-MurNAc-pentapeptide, known as lipid I. The polypeptide is Phospho-N-acetylmuramoyl-pentapeptide-transferase (Maridesulfovibrio salexigens (strain ATCC 14822 / DSM 2638 / NCIMB 8403 / VKM B-1763) (Desulfovibrio salexigens)).